A 235-amino-acid chain; its full sequence is Urease accessory protein UreF (235 aa).

Belongs to the UreF family. In terms of assembly, ureD, UreF and UreG form a complex that acts as a GTP-hydrolysis-dependent molecular chaperone, activating the urease apoprotein by helping to assemble the nickel containing metallocenter of UreC. The UreE protein probably delivers the nickel.

The protein localises to the cytoplasm. Required for maturation of urease via the functional incorporation of the urease nickel metallocenter. This is Urease accessory protein UreF from Pseudoalteromonas translucida (strain TAC 125).